Here is a 252-residue protein sequence, read N- to C-terminus: MSAKGVAIITGAAQGIGRAIVVRLAADGFDVAVNDLPNDAQVAKLTELAEEIRATGRKAIVVPGDISQEAIVEKIVADTVEQLGGVDVMVANAGICELSPIVSTSVEQWDTTQAVNLRGVFLCFKHAGKQMLAQGRPGRLIGGGSLGGFSGLPMGSAYAASKAGMRALTHSAARELGPSGITANSYAPGIVATPLTIGNYGQEFLDSQKATCAVNDNGTPEDIAALVSFLASKESRFITGQTIMIDGGRLNI.

8 residues coordinate NADP(+): Ile-16, Asp-65, Asn-92, Lys-125, Tyr-158, Lys-162, Val-191, and Thr-193. Tyr-158 acts as the Proton acceptor in catalysis. The active-site Proton donor is Tyr-158. The active-site Lowers pKa of active site Tyr is the Lys-162.

This sequence belongs to the short-chain dehydrogenases/reductases (SDR) family.

It carries out the reaction cyathadiol + reduced [NADPH--hemoprotein reductase] + O2 = cyathatriol + oxidized [NADPH--hemoprotein reductase] + H2O + H(+). It catalyses the reaction 11-O-acetylcyathatriol + A = 11-O-acetylcyathin A3 + AH2. The catalysed reaction is cyathatriol + A = cyathin A3 + AH2. It participates in secondary metabolite biosynthesis. Functionally, short-chain dehydrogenase/reductase; part of the gene cluster that mediates the biosynthesis of erinacines, cyathane-xylosides that show unique biological activities, including leishmanicidal activity, stimulating activity for nerve growth-factor synthesis, and agonistic activity toward the kappa opioid receptor. Within the pathway, eriH works with eriA to catalyze C-11 hydroxylation of cyathadiol to produce cyathatriol. EriH also catalyzes oxidation of 11-O-acetyl-cyathatriol into 1-O-acetylcyathin A3. In the absence of eriL and eriJ, the SDR eriH is able to convert cyathatriol to cyathin A3; this is likely a switching mechanism in the biosynthesis of cyathins (C-14 ketogroup)and erinacines (C-14 glycosylated group). The first step of the erinacines biosynthesis pathway is catalyzed by the geranylgeranyl diphosphate (GGPP) synthase eriE via conversion of farnesyl pyrophosphate and isopentyl pyrophosphate into geranylgeranyl pyrophosphate (GGPP). GGPP is then substrate of the diterpene cyclase eriG for the production of cyatha-3,12-diene. The cytochrome P450 monooxygenase eriI then hydroxylates cyatha-3,12-diene at C-14 of the seven-membered ring to produce erinacol, which is further hydroxylated at C-15 by the cytochrome P450 monooxygenase eriC to yield cyathadiol. The cytochrome P450 monooxygenase eriA then catalyzes C-11 hydroxylation in the presence of the short chain dehydrogenase/reductase (SDR) eriH, which leads to the production of cyathatriol. The acetyltransferase eriL converts cyathatriol into 11-O-acetyl-cyathatriol. The SDR eriH catalyzes further oxidation of 11-O-acetyl-cyathatriol into 1-O-acetylcyathin A3. Finally, the glycosyl transferase eriJ tranfers xylose from UDP-xylose onto C-14 of 11-O-acetyl-cyathatriol to form eracine Q. EriJ is also able to convert 11-O-acetyl-cyathatriol to eracine Q2 by using UDP-D-glucose as cosubstrate, but at a lower rate. The sequence is that of Short-chain dehydrogenase/reductase eriH from Hericium erinaceus (Lion's mane mushroom).